The chain runs to 366 residues: Alanine racemase (366 aa).

Residue K40 is the Proton acceptor; specific for D-alanine of the active site. K40 bears the N6-(pyridoxal phosphate)lysine mark. Substrate is bound at residue R136. Y263 functions as the Proton acceptor; specific for L-alanine in the catalytic mechanism. A substrate-binding site is contributed by M310.

The protein belongs to the alanine racemase family. Pyridoxal 5'-phosphate serves as cofactor.

It carries out the reaction L-alanine = D-alanine. It functions in the pathway amino-acid biosynthesis; D-alanine biosynthesis; D-alanine from L-alanine: step 1/1. Its function is as follows. Catalyzes the interconversion of L-alanine and D-alanine. May also act on other amino acids. The sequence is that of Alanine racemase (alr) from Streptococcus pyogenes serotype M5 (strain Manfredo).